The primary structure comprises 60 residues: Large ribosomal subunit protein bL32 (60 aa).

A compositionally biased stretch (basic residues) spans 1–16 (MAVPRRKTSPSRRGMR). The interval 1 to 60 (MAVPRRKTSPSRRGMRRSADAIKKPTYVEDKDSGELRRPHHLDLKTGMYKGRQVLKKKES) is disordered. Basic and acidic residues predominate over residues 17 to 44 (RSADAIKKPTYVEDKDSGELRRPHHLDL).

Belongs to the bacterial ribosomal protein bL32 family.

The polypeptide is Large ribosomal subunit protein bL32 (Bradyrhizobium diazoefficiens (strain JCM 10833 / BCRC 13528 / IAM 13628 / NBRC 14792 / USDA 110)).